Here is a 563-residue protein sequence, read N- to C-terminus: Heat shock 70 kDa protein 8 (563 aa).

The disordered stretch occupies residues 1–25 (MAEAAYTVASDSENTGEEKSSSSPS). N-acetylalanine is present on A2.

This sequence belongs to the heat shock protein 70 (TC 1.A.33) family. DnaK subfamily.

Functionally, in cooperation with other chaperones, Hsp70s are key components that facilitate folding of de novo synthesized proteins, assist translocation of precursor proteins into organelles, and are responsible for degradation of damaged protein under stress conditions. The sequence is that of Heat shock 70 kDa protein 8 (HSP70-8) from Arabidopsis thaliana (Mouse-ear cress).